We begin with the raw amino-acid sequence, 542 residues long: Chaperonin GroEL 2 (542 aa).

ATP-binding positions include 30–33, lysine 51, 87–91, glycine 415, and aspartate 496; these read TLGP and DGTTT.

The protein belongs to the chaperonin (HSP60) family. Forms a cylinder of 14 subunits composed of two heptameric rings stacked back-to-back. Interacts with the co-chaperonin GroES.

It localises to the cytoplasm. It catalyses the reaction ATP + H2O + a folded polypeptide = ADP + phosphate + an unfolded polypeptide.. Functionally, together with its co-chaperonin GroES, plays an essential role in assisting protein folding. The GroEL-GroES system forms a nano-cage that allows encapsulation of the non-native substrate proteins and provides a physical environment optimized to promote and accelerate protein folding. This Chelativorans sp. (strain BNC1) protein is Chaperonin GroEL 2.